A 1034-amino-acid chain; its full sequence is Beta-galactosidase (1034 aa).

Glutamate 481 acts as the Proton donor in catalysis. Glutamate 547 serves as the catalytic Nucleophile.

This sequence belongs to the glycosyl hydrolase 2 family.

It carries out the reaction Hydrolysis of terminal non-reducing beta-D-galactose residues in beta-D-galactosides.. The polypeptide is Beta-galactosidase (bgaM) (Priestia megaterium (strain DSM 319 / IMG 1521) (Bacillus megaterium)).